The following is an 817-amino-acid chain: Leucine--tRNA ligase (817 aa).

Residues 42-52 carry the 'HIGH' region motif; it reads PYPSGRLHMGH. The short motif at 576–580 is the 'KMSKS' region element; the sequence is KMSKS. Position 579 (lysine 579) interacts with ATP.

It belongs to the class-I aminoacyl-tRNA synthetase family.

It localises to the cytoplasm. It carries out the reaction tRNA(Leu) + L-leucine + ATP = L-leucyl-tRNA(Leu) + AMP + diphosphate. This chain is Leucine--tRNA ligase, found in Halorhodospira halophila (strain DSM 244 / SL1) (Ectothiorhodospira halophila (strain DSM 244 / SL1)).